A 244-amino-acid polypeptide reads, in one-letter code: Geranylgeranylglyceryl phosphate synthase (244 aa).

2 residues coordinate Mg(2+): aspartate 20 and serine 49. Residues 169–175 (YLEAGSG), 200–201 (GG), and 222–223 (GT) contribute to the sn-glycerol 1-phosphate site.

This sequence belongs to the GGGP/HepGP synthase family. Group II subfamily. Requires Mg(2+) as cofactor.

The protein localises to the cytoplasm. The catalysed reaction is sn-glycerol 1-phosphate + (2E,6E,10E)-geranylgeranyl diphosphate = sn-3-O-(geranylgeranyl)glycerol 1-phosphate + diphosphate. The protein operates within membrane lipid metabolism; glycerophospholipid metabolism. In terms of biological role, prenyltransferase that catalyzes the transfer of the geranylgeranyl moiety of geranylgeranyl diphosphate (GGPP) to the C3 hydroxyl of sn-glycerol-1-phosphate (G1P). This reaction is the first ether-bond-formation step in the biosynthesis of archaeal membrane lipids. The chain is Geranylgeranylglyceryl phosphate synthase from Korarchaeum cryptofilum (strain OPF8).